The sequence spans 545 residues: Tripartite motif-containing 55 (545 aa).

The RING-type zinc finger occupies 26 to 82 (CPICLEMFTKPVVILPCQHNLCRKCASDIFQASNPYLPTRGGTTVASGGRFRCPSCR). The segment at 119–161 (LDQPMCEEHEEERINIYCLNCEVPTCSLCKVFGAHKDCQVAPL) adopts a B box-type zinc-finger fold. 4 residues coordinate Zn(2+): cysteine 124, histidine 127, cysteine 147, and histidine 153. In terms of domain architecture, COS spans 269–327 (MDEPEMAVFLQNAKTLLQKIVEASKAFQMEKLEQGYEIMSNFTVNLNREEKIIREIDFS). 3 disordered regions span residues 324–352 (IDFSREEEEEEDAGEIDEEGEGEDAVEVE), 359–378 (IASSGEEESLEKAAEPSQLP), and 417–532 (SQQT…EPAR). Acidic residues predominate over residues 328 to 352 (REEEEEEDAGEIDEEGEGEDAVEVE). The span at 417–428 (SQQTTQSETSGP) shows a compositional bias: polar residues. Over residues 474-485 (SSVQSAEVAEAA) the composition is skewed to low complexity. The segment covering 486–506 (TNEQAAVSGKESSSTAATSQI) has biased composition (polar residues).

Post-translationally, targeted for degradation through the proteasomal and lysosomal pathways in the presence of SUMO3. Widely expressed in various tissues, besides skeletal muscle and heart, such as brain, lung, liver, spleen and kidney.

The protein localises to the nucleus. It localises to the cytoplasm. The enzyme catalyses S-ubiquitinyl-[E2 ubiquitin-conjugating enzyme]-L-cysteine + [acceptor protein]-L-lysine = [E2 ubiquitin-conjugating enzyme]-L-cysteine + N(6)-ubiquitinyl-[acceptor protein]-L-lysine.. E3 ubiquitin ligase that plays an important role in regulating cardiac development and contractility, muscle growth, metabolism, and fiber-type differentiation. Acts as a critical factor that regulates cardiomyocyte size during development in concert with TRIM63 by regulating E2F1-mediated gene expression. Plays a role in apoptosis induction in cardiomyocytes by promoting ubiquitination of the DUSP1 phosphatase. Promotes non-canonical NF-kappa-B signaling and B-cell-mediated immune responses by mediating NFKB2 'Lys-48'-linked ubiquitination and processing. In turn, NFKB2 is further processed by valosin-containing protein/VCP, an ATPase that mediates ubiquitin-dependent protein degradation by the proteasome. May play a role in preventing macrophages from producing inflammatory factors and migrating by downregulating the level of nuclear NF-kappa-B subunit RELA. Modifies also PPARG via polyubiquitination and accelerates PPARG proteasomal degradation to inhibit its activity. In Mus musculus (Mouse), this protein is Tripartite motif-containing 55 (Trim55).